The chain runs to 176 residues: Ribosome maturation factor RimM (176 aa).

In terms of domain architecture, PRC barrel spans glutamate 101–leucine 170.

It belongs to the RimM family. In terms of assembly, binds ribosomal protein uS19.

The protein resides in the cytoplasm. Its function is as follows. An accessory protein needed during the final step in the assembly of 30S ribosomal subunit, possibly for assembly of the head region. Essential for efficient processing of 16S rRNA. May be needed both before and after RbfA during the maturation of 16S rRNA. It has affinity for free ribosomal 30S subunits but not for 70S ribosomes. The sequence is that of Ribosome maturation factor RimM from Solibacter usitatus (strain Ellin6076).